Consider the following 387-residue polypeptide: Migration and invasion-inhibitory protein (387 aa).

Positions 50–59 are enriched in polar residues; that stretch reads NLEMPLSQET. Disordered stretches follow at residues 50-80 and 133-172; these read NLEMPLSQETSSASSVAPSSQDKRHMLDPLD and VSLGGPKGLGPDKTQVPRSILSRLSKPSKPRVTSQESAVP. The span at 60-69 shows a compositional bias: low complexity; the sequence is SSASSVAPSS. Over residues 70–80 the composition is skewed to basic and acidic residues; the sequence is QDKRHMLDPLD. S307 is modified (phosphoserine).

As to quaternary structure, interacts with IGFBP2.

Inhibits glioma cells invasion and down-regulates adhesion- and motility-associated genes such as NFKB2 and ICAM1. Exhibits opposing effects to IGFBP2 on cell invasion. The chain is Migration and invasion-inhibitory protein (Miip) from Mus musculus (Mouse).